A 550-amino-acid polypeptide reads, in one-letter code: Membrane protein insertase YidC (550 aa).

A helical membrane pass occupies residues Leu-6 to Pro-26. The disordered stretch occupies residues Pro-30–Leu-59. 4 helical membrane-spanning segments follow: residues Trp-360–Ala-380, Leu-430–Val-450, Ile-472–Ala-492, and Pro-504–Val-524.

The protein belongs to the OXA1/ALB3/YidC family. Type 1 subfamily. Interacts with the Sec translocase complex via SecD. Specifically interacts with transmembrane segments of nascent integral membrane proteins during membrane integration.

Its subcellular location is the cell inner membrane. In terms of biological role, required for the insertion and/or proper folding and/or complex formation of integral membrane proteins into the membrane. Involved in integration of membrane proteins that insert both dependently and independently of the Sec translocase complex, as well as at least some lipoproteins. Aids folding of multispanning membrane proteins. The protein is Membrane protein insertase YidC of Laribacter hongkongensis (strain HLHK9).